The chain runs to 194 residues: Large ribosomal subunit protein bL25 (194 aa).

The protein belongs to the bacterial ribosomal protein bL25 family. CTC subfamily. As to quaternary structure, part of the 50S ribosomal subunit; part of the 5S rRNA/L5/L18/L25 subcomplex. Contacts the 5S rRNA. Binds to the 5S rRNA independently of L5 and L18.

Its function is as follows. This is one of the proteins that binds to the 5S RNA in the ribosome where it forms part of the central protuberance. The protein is Large ribosomal subunit protein bL25 of Parabacteroides distasonis (strain ATCC 8503 / DSM 20701 / CIP 104284 / JCM 5825 / NCTC 11152).